A 176-amino-acid chain; its full sequence is Caltractin (176 aa).

The disordered stretch occupies residues 1–27 (MNRAAIAAGKPSGSISTGKPRRKTRAE). EF-hand domains are found at residues 31–66 (EMKH…LGFD), 67–102 (VKKE…KISN), 104–139 (DPTE…LSEN), and 140–175 (ISDE…TSAF). Ca(2+) contacts are provided by aspartate 44, aspartate 46, serine 48, arginine 50, and glutamate 55. Positions 153, 155, 157, 159, and 164 each coordinate Ca(2+).

It belongs to the centrin family. In terms of assembly, monomer.

It localises to the cytoplasm. It is found in the cytoskeleton. The protein resides in the microtubule organizing center. The protein localises to the centrosome. Its function is as follows. Plays a fundamental role in microtubule-organizing center structure and function. The polypeptide is Caltractin (CAL) (Giardia intestinalis (Giardia lamblia)).